Consider the following 425-residue polypeptide: Exodeoxyribonuclease 7 large subunit (425 aa).

The protein belongs to the XseA family. Heterooligomer composed of large and small subunits.

It localises to the cytoplasm. The catalysed reaction is Exonucleolytic cleavage in either 5'- to 3'- or 3'- to 5'-direction to yield nucleoside 5'-phosphates.. Bidirectionally degrades single-stranded DNA into large acid-insoluble oligonucleotides, which are then degraded further into small acid-soluble oligonucleotides. This chain is Exodeoxyribonuclease 7 large subunit, found in Nocardia farcinica (strain IFM 10152).